Reading from the N-terminus, the 374-residue chain is DNA replication and repair protein RecF (374 aa).

Residue Gly-30–Thr-37 participates in ATP binding.

It belongs to the RecF family.

It localises to the cytoplasm. In terms of biological role, the RecF protein is involved in DNA metabolism; it is required for DNA replication and normal SOS inducibility. RecF binds preferentially to single-stranded, linear DNA. It also seems to bind ATP. The sequence is that of DNA replication and repair protein RecF from Lactobacillus gasseri (strain ATCC 33323 / DSM 20243 / BCRC 14619 / CIP 102991 / JCM 1131 / KCTC 3163 / NCIMB 11718 / NCTC 13722 / AM63).